A 316-amino-acid polypeptide reads, in one-letter code: Porphobilinogen deaminase (316 aa).

Cys-245 carries the post-translational modification S-(dipyrrolylmethanemethyl)cysteine.

The protein belongs to the HMBS family. In terms of assembly, monomer. Dipyrromethane is required as a cofactor.

The enzyme catalyses 4 porphobilinogen + H2O = hydroxymethylbilane + 4 NH4(+). The protein operates within porphyrin-containing compound metabolism; protoporphyrin-IX biosynthesis; coproporphyrinogen-III from 5-aminolevulinate: step 2/4. Its pathway is porphyrin-containing compound metabolism; chlorophyll biosynthesis. Functionally, tetrapolymerization of the monopyrrole PBG into the hydroxymethylbilane pre-uroporphyrinogen in several discrete steps. This chain is Porphobilinogen deaminase, found in Prochlorococcus marinus subsp. pastoris (strain CCMP1986 / NIES-2087 / MED4).